The following is a 233-amino-acid chain: Ion-translocating oxidoreductase complex subunit E (233 aa).

Helical transmembrane passes span 18–38, 39–59, 69–89, 92–112, 128–148, and 182–202; these read ALVQLLGLCPLLAVSSTATNA, LGLGLATTLVLVCTNTAVSAL, IPIYVMIIASVVSTVQMLINA, FGLYQSLGIFIPLIVTNCIVI, ALDGFAMGMGATCALFVLGAL, and PFLLAMLPPGAFIGLGLLLAG.

This sequence belongs to the NqrDE/RnfAE family. The complex is composed of six subunits: RnfA, RnfB, RnfC, RnfD, RnfE and RnfG.

It localises to the cell inner membrane. Functionally, part of a membrane-bound complex that couples electron transfer with translocation of ions across the membrane. The protein is Ion-translocating oxidoreductase complex subunit E of Yersinia pestis bv. Antiqua (strain Angola).